The sequence spans 240 residues: 4-hydroxy-tetrahydrodipicolinate reductase (240 aa).

NAD(+) contacts are provided by residues 79 to 81 (ATT) and 103 to 106 (SANM). Histidine 135 functions as the Proton donor/acceptor in the catalytic mechanism. Histidine 136 provides a ligand contact to (S)-2,3,4,5-tetrahydrodipicolinate. Catalysis depends on lysine 139, which acts as the Proton donor. Position 145–146 (145–146 (GT)) interacts with (S)-2,3,4,5-tetrahydrodipicolinate.

Belongs to the DapB family.

The protein resides in the cytoplasm. It carries out the reaction (S)-2,3,4,5-tetrahydrodipicolinate + NAD(+) + H2O = (2S,4S)-4-hydroxy-2,3,4,5-tetrahydrodipicolinate + NADH + H(+). The enzyme catalyses (S)-2,3,4,5-tetrahydrodipicolinate + NADP(+) + H2O = (2S,4S)-4-hydroxy-2,3,4,5-tetrahydrodipicolinate + NADPH + H(+). It participates in amino-acid biosynthesis; L-lysine biosynthesis via DAP pathway; (S)-tetrahydrodipicolinate from L-aspartate: step 4/4. Catalyzes the conversion of 4-hydroxy-tetrahydrodipicolinate (HTPA) to tetrahydrodipicolinate. In Staphylococcus aureus (strain Mu3 / ATCC 700698), this protein is 4-hydroxy-tetrahydrodipicolinate reductase.